Here is a 189-residue protein sequence, read N- to C-terminus: Large ribosomal subunit protein eL20 (189 aa).

The protein belongs to the eukaryotic ribosomal protein eL20 family.

Its subcellular location is the cytoplasm. This chain is Large ribosomal subunit protein eL20 (RPL18A), found in Tetrahymena thermophila.